A 312-amino-acid polypeptide reads, in one-letter code: Ribonuclease Z (312 aa).

7 residues coordinate Zn(2+): H62, H64, D66, H67, H144, D215, and H273. D66 serves as the catalytic Proton acceptor.

Belongs to the RNase Z family. In terms of assembly, homodimer. Zn(2+) serves as cofactor.

The enzyme catalyses Endonucleolytic cleavage of RNA, removing extra 3' nucleotides from tRNA precursor, generating 3' termini of tRNAs. A 3'-hydroxy group is left at the tRNA terminus and a 5'-phosphoryl group is left at the trailer molecule.. Zinc phosphodiesterase, which displays some tRNA 3'-processing endonuclease activity. Probably involved in tRNA maturation, by removing a 3'-trailer from precursor tRNA. The chain is Ribonuclease Z from Prochlorococcus marinus (strain MIT 9301).